The chain runs to 538 residues: Syncytin-1 (538 aa).

The first 20 residues, 1–20, serve as a signal peptide directing secretion; it reads MALPYHIFLFTVLLPSFTLT. Residues 31–443 lie on the Extracellular side of the membrane; the sequence is SSPYQEFLWR…NIGPWGLLSQ (413 aa). Asparagine 169 is a glycosylation site (N-linked (GlcNAc...) asparagine). Residues 186–189 carry the CXXC motif; that stretch reads CWMC. Intrachain disulfides connect cysteine 186-cysteine 189, cysteine 186-cysteine 405, and cysteine 397-cysteine 404. Residues asparagine 208, asparagine 214, asparagine 234, asparagine 242, and asparagine 281 are each glycosylated (N-linked (GlcNAc...) asparagine). A fusion peptide region spans residues 320 to 340; that stretch reads ILPFVMGAGVLGALGTGIGSI. Residues 380–396 are immunosuppression; the sequence is LQNRRALDLLTAERGGT. The CX6CC motif lies at 397–405; it reads CLFLGEECC. Residue asparagine 409 is glycosylated (N-linked (GlcNAc...) asparagine). Residues 444–464 traverse the membrane as a helical segment; that stretch reads WMPWILPFLGPLAAIILLLLF. The segment at 465–484 is essential for the fusiogenic function; sequence GPCIFNLLVNFVSSRIEAIK. Residues 465–538 lie on the Cytoplasmic side of the membrane; sequence GPCIFNLLVN…LLRPNSAGSS (74 aa). Residues 494–538 form a disordered region; sequence KTKNYRRSLDWPASPRSDVNDIKGIPPEEISTAQPLLRPNSAGSS.

The protein belongs to the gamma type-C retroviral envelope protein family. HERV class-I W env subfamily. In terms of assembly, the mature envelope protein (Env) consists of a trimer of SU-TM heterodimers attached probably by a labile interchain disulfide bond. Interacts with the C-type lectin CD209/DC-SIGN. In terms of processing, specific enzymatic cleavages in vivo yield mature proteins. Envelope glycoproteins are synthesized as an inactive precursor that is heavily N-glycosylated and processed likely by furin in the Golgi to yield the mature SU and TM proteins. The cleavage site between SU and TM requires the minimal sequence [KR]-X-[KR]-R. The CXXC motif is highly conserved across a broad range of retroviral envelope proteins. It is thought to participate in the formation of a labile disulfide bond possibly with the CX6CC motif present in the transmembrane protein.

It localises to the cell membrane. Its subcellular location is the virion. Its function is as follows. This endogenous retroviral envelope protein has retained its original fusogenic properties and participates in trophoblast fusion and the formation of a syncytium during placenta morphogenesis. May recognize and induce fusion through binding of SLC1A4 and SLC1A5. Endogenous envelope proteins may have kept, lost or modified their original function during evolution. Retroviral envelope proteins mediate receptor recognition and membrane fusion during early infection. The surface protein (SU) mediates receptor recognition, while the transmembrane protein (TM) acts as a class I viral fusion protein. The protein may have at least 3 conformational states: pre-fusion native state, pre-hairpin intermediate state, and post-fusion hairpin state. During viral and target cell membrane fusion, the coiled coil regions (heptad repeats) assume a trimer-of-hairpins structure, positioning the fusion peptide in close proximity to the C-terminal region of the ectodomain. The formation of this structure appears to drive apposition and subsequent fusion of membranes. The protein is Syncytin-1 (ERVW-1) of Hylobates pileatus (Pileated gibbon).